Here is a 465-residue protein sequence, read N- to C-terminus: Transcriptional protein swt1 (465 aa).

Residues 70 to 190 (GLFVLDTNFL…LLSDDKNLSI (121 aa)) form the PINc domain.

It belongs to the SWT1 family.

It localises to the cytoplasm. Its subcellular location is the nucleus. Involved in transcription. The protein is Transcriptional protein swt1 of Schizosaccharomyces pombe (strain 972 / ATCC 24843) (Fission yeast).